The sequence spans 428 residues: Zinc-type alcohol dehydrogenase B (428 aa).

Zn(2+) contacts are provided by Cys116, His137, Cys167, Cys170, Cys173, and Cys181. At Lys393 the chain carries N6-benzoyllysine.

The protein belongs to the zinc-containing alcohol dehydrogenase family. Class-III subfamily. As to quaternary structure, homodimer. The cofactor is Zn(2+). In terms of processing, benzoylation at lys-393 by gcnE leads to the activation od adhB.

The enzyme catalyses a primary alcohol + NAD(+) = an aldehyde + NADH + H(+). It catalyses the reaction a secondary alcohol + NAD(+) = a ketone + NADH + H(+). Functionally, zinc-type alcohol dehydrogenase involved in development, secondary metabolism, pathogenicity, and stress response. Specifically controls the formation of sclerotia and the biosynthesis of aflatoxin. Contribute to seed colonization of A flavus on host maize seed. This Aspergillus flavus (strain ATCC 200026 / FGSC A1120 / IAM 13836 / NRRL 3357 / JCM 12722 / SRRC 167) protein is Zinc-type alcohol dehydrogenase B.